We begin with the raw amino-acid sequence, 248 residues long: Exosome complex component Rrp41 (248 aa).

The protein belongs to the RNase PH family. Rrp41 subfamily. Component of the archaeal exosome complex. Forms a hexameric ring-like arrangement composed of 3 Rrp41-Rrp42 heterodimers. The hexameric ring associates with a trimer of Rrp4 and/or Csl4 subunits.

It localises to the cytoplasm. Its function is as follows. Catalytic component of the exosome, which is a complex involved in RNA degradation. Has 3'-&gt;5' exoribonuclease activity. Can also synthesize heteromeric RNA-tails. This Thermoplasma acidophilum (strain ATCC 25905 / DSM 1728 / JCM 9062 / NBRC 15155 / AMRC-C165) protein is Exosome complex component Rrp41.